A 255-amino-acid chain; its full sequence is Small ribosomal subunit protein uS2 (255 aa).

Residues 232-255 (ASGRDLGASEEVPVEPALEEASEA) are disordered.

The protein belongs to the universal ribosomal protein uS2 family.

This is Small ribosomal subunit protein uS2 from Sinorhizobium medicae (strain WSM419) (Ensifer medicae).